A 167-amino-acid polypeptide reads, in one-letter code: Leukotoxin-activating lysine-acyltransferase LktC serotype T3 (167 aa).

Catalysis depends on residues His-22 and Asp-91.

Belongs to the RTX toxin acyltransferase family.

Its subcellular location is the cytoplasm. The catalysed reaction is a fatty acyl-[ACP] + L-lysyl-[protein] = N(6)-(fatty acyl)-L-lysyl-[protein] + holo-[ACP] + H(+). Functionally, involved in fatty acylation of the protoxin (LktA) at two internal lysine residues, thereby converting it to the active toxin. This is Leukotoxin-activating lysine-acyltransferase LktC serotype T3 (lktC) from Mannheimia haemolytica (Pasteurella haemolytica).